The chain runs to 264 residues: Acetylglutamate kinase (264 aa).

Substrate contacts are provided by residues 40 to 41, arginine 62, and asparagine 158; that span reads GG.

It belongs to the acetylglutamate kinase family. ArgB subfamily.

The protein resides in the cytoplasm. It carries out the reaction N-acetyl-L-glutamate + ATP = N-acetyl-L-glutamyl 5-phosphate + ADP. Its pathway is amino-acid biosynthesis; L-arginine biosynthesis; N(2)-acetyl-L-ornithine from L-glutamate: step 2/4. In terms of biological role, catalyzes the ATP-dependent phosphorylation of N-acetyl-L-glutamate. The sequence is that of Acetylglutamate kinase from Cytophaga hutchinsonii (strain ATCC 33406 / DSM 1761 / CIP 103989 / NBRC 15051 / NCIMB 9469 / D465).